The sequence spans 306 residues: Olfactory receptor 8G17 (306 aa).

Over 1 to 28 (MEKGNQSTVNKFFLSGLTEQPELQLPLF) the chain is Extracellular. N-linked (GlcNAc...) asparagine glycosylation is present at Asn-5. Residues 29–49 (LLFLGIYLLTVLGNLGMIILI) traverse the membrane as a helical segment. Residues 50-56 (LLSSYLH) lie on the Cytoplasmic side of the membrane. The helical transmembrane segment at 57–77 (TPMYFFLSSLSFIDFCQSTVI) threads the bilayer. The Extracellular segment spans residues 78–97 (TPKMLVKFVREKNEISYPEC). The helical transmembrane segment at 98–118 (ITQLCFFVIFAVSESYMLAAM) threads the bilayer. Residues 119–143 (AYDRYVAICSPLLYSSIMSQHKCLS) lie on the Cytoplasmic side of the membrane. Residues 144 to 164 (LVLGVYILGIVCASAHVGCIF) form a helical membrane-spanning segment. Over 165–196 (RIDFCKSDLINHYFCDLISILNLSCSNIFVND) the chain is Extracellular. A helical membrane pass occupies residues 197-217 (LVILIFSLINTIFPTLTILSS). The Cytoplasmic segment spans residues 218–236 (YAFIIISILRIKSTEGRSK). A helical transmembrane segment spans residues 237 to 257 (AFSTCSSHISAVAIFYISAGF). Residues 258-271 (TYLNPSSSHSMDEG) lie on the Extracellular side of the membrane. Residues 272 to 292 (KVSSIFYTIIVPMLNPLIYSL) form a helical membrane-spanning segment. The Cytoplasmic portion of the chain corresponds to 293-306 (RNKDVKIALKKMIE).

It belongs to the G-protein coupled receptor 1 family.

Its subcellular location is the cell membrane. In terms of biological role, odorant receptor. The chain is Olfactory receptor 8G17 from Mus musculus (Mouse).